A 154-amino-acid chain; its full sequence is Ribosome maturation factor RimP (154 aa).

This sequence belongs to the RimP family.

It localises to the cytoplasm. Required for maturation of 30S ribosomal subunits. In Cyanothece sp. (strain PCC 7425 / ATCC 29141), this protein is Ribosome maturation factor RimP.